Consider the following 168-residue polypeptide: UPF0178 protein RBAM_023530 (168 aa).

This sequence belongs to the UPF0178 family.

This is UPF0178 protein RBAM_023530 from Bacillus velezensis (strain DSM 23117 / BGSC 10A6 / LMG 26770 / FZB42) (Bacillus amyloliquefaciens subsp. plantarum).